Here is a 54-residue protein sequence, read N- to C-terminus: Relaxin (54 aa).

A Pyrrolidone carboxylic acid modification is found at Gln1. 3 disulfides stabilise this stretch: Cys10–Cys41, Cys22–Cys54, and Cys40–Cys45.

It belongs to the insulin family. In terms of assembly, heterodimer of a B chain and an A chain linked by two disulfide bonds.

Its subcellular location is the secreted. Functionally, relaxin is an ovarian hormone that acts with estrogen to produce dilatation of the birth canal in many mammals. The protein is Relaxin of Balaenoptera edeni (Pigmy Bryde's whale).